The chain runs to 701 residues: C6 finger domain transcription factor nscR (701 aa).

The zn(2)-C6 fungal-type DNA-binding region spans 17–43; sequence CELCRERKVKCDKLDPCTNCASAGVVC.

It localises to the nucleus. Its function is as follows. Transcription factor that specifically regulates the neosartoricin B biosynthesis gene cluster. The chain is C6 finger domain transcription factor nscR from Arthroderma gypseum (strain ATCC MYA-4604 / CBS 118893) (Microsporum gypseum).